The sequence spans 877 residues: DNA mismatch repair protein MutS (877 aa).

Gly-630–Ser-637 lines the ATP pocket.

Belongs to the DNA mismatch repair MutS family.

In terms of biological role, this protein is involved in the repair of mismatches in DNA. It is possible that it carries out the mismatch recognition step. This protein has a weak ATPase activity. This chain is DNA mismatch repair protein MutS, found in Ruegeria pomeroyi (strain ATCC 700808 / DSM 15171 / DSS-3) (Silicibacter pomeroyi).